The chain runs to 92 residues: Small ribosomal subunit protein uS19c (92 aa).

The protein belongs to the universal ribosomal protein uS19 family.

The protein localises to the plastid. Its function is as follows. Protein S19 forms a complex with S13 that binds strongly to the 16S ribosomal RNA. The polypeptide is Small ribosomal subunit protein uS19c (Cuscuta obtusiflora (Peruvian dodder)).